Here is a 150-residue protein sequence, read N- to C-terminus: Large ribosomal subunit protein bL9 (150 aa).

The protein belongs to the bacterial ribosomal protein bL9 family.

Its function is as follows. Binds to the 23S rRNA. The sequence is that of Large ribosomal subunit protein bL9 from Streptococcus agalactiae serotype III (strain NEM316).